Here is a 554-residue protein sequence, read N- to C-terminus: Hydroxylamine reductase (554 aa).

Cys-3, Cys-6, Cys-18, and Cys-25 together coordinate [2Fe-2S] cluster. The hybrid [4Fe-2O-2S] cluster site is built by His-252, Glu-276, Cys-320, Cys-408, Cys-436, Cys-461, Glu-495, and Lys-497. The residue at position 408 (Cys-408) is a Cysteine persulfide.

Belongs to the HCP family. The cofactor is [2Fe-2S] cluster. It depends on hybrid [4Fe-2O-2S] cluster as a cofactor.

It localises to the cytoplasm. The catalysed reaction is A + NH4(+) + H2O = hydroxylamine + AH2 + H(+). Catalyzes the reduction of hydroxylamine to form NH(3) and H(2)O. This chain is Hydroxylamine reductase, found in Shewanella putrefaciens (strain CN-32 / ATCC BAA-453).